The chain runs to 462 residues: uncharacterized protein (462 aa).

The next 2 helical transmembrane spans lie at Trp-381 to Met-401 and Leu-433 to Ile-453.

Its subcellular location is the cell membrane. This is an uncharacterized protein from Methanocaldococcus jannaschii (strain ATCC 43067 / DSM 2661 / JAL-1 / JCM 10045 / NBRC 100440) (Methanococcus jannaschii).